The sequence spans 159 residues: MDATFWALVALIIFVGILLYMKVPGMLAGSLDARAERIKNELEEARRLREEAQQLLAEYQRKRREAEQEAKELVDAAKREAKLIVSDAKVKTEEYVSRRTALAEQKIAQAERDAVNEVRSRAVDVAVAAAGKLLAEKIDTKTGSELFKASLQDVKTRLN.

Residues 1–21 (MDATFWALVALIIFVGILLYM) traverse the membrane as a helical segment.

This sequence belongs to the ATPase B chain family. In terms of assembly, F-type ATPases have 2 components, F(1) - the catalytic core - and F(0) - the membrane proton channel. F(1) has five subunits: alpha(3), beta(3), gamma(1), delta(1), epsilon(1). F(0) has three main subunits: a(1), b(2) and c(10-14). The alpha and beta chains form an alternating ring which encloses part of the gamma chain. F(1) is attached to F(0) by a central stalk formed by the gamma and epsilon chains, while a peripheral stalk is formed by the delta and b chains.

The protein resides in the cell inner membrane. In terms of biological role, f(1)F(0) ATP synthase produces ATP from ADP in the presence of a proton or sodium gradient. F-type ATPases consist of two structural domains, F(1) containing the extramembraneous catalytic core and F(0) containing the membrane proton channel, linked together by a central stalk and a peripheral stalk. During catalysis, ATP synthesis in the catalytic domain of F(1) is coupled via a rotary mechanism of the central stalk subunits to proton translocation. Component of the F(0) channel, it forms part of the peripheral stalk, linking F(1) to F(0). The polypeptide is ATP synthase subunit b 2 (Chelativorans sp. (strain BNC1)).